Consider the following 341-residue polypeptide: tRNA N6-adenosine threonylcarbamoyltransferase (341 aa).

Histidine 111 and histidine 115 together coordinate Fe cation. Residues 134 to 138, aspartate 167, glycine 180, and asparagine 274 each bind substrate; that span reads LVSGG. Residue aspartate 302 participates in Fe cation binding.

The protein belongs to the KAE1 / TsaD family. It depends on Fe(2+) as a cofactor.

The protein resides in the cytoplasm. The enzyme catalyses L-threonylcarbamoyladenylate + adenosine(37) in tRNA = N(6)-L-threonylcarbamoyladenosine(37) in tRNA + AMP + H(+). Functionally, required for the formation of a threonylcarbamoyl group on adenosine at position 37 (t(6)A37) in tRNAs that read codons beginning with adenine. Is involved in the transfer of the threonylcarbamoyl moiety of threonylcarbamoyl-AMP (TC-AMP) to the N6 group of A37, together with TsaE and TsaB. TsaD likely plays a direct catalytic role in this reaction. This Paraburkholderia phymatum (strain DSM 17167 / CIP 108236 / LMG 21445 / STM815) (Burkholderia phymatum) protein is tRNA N6-adenosine threonylcarbamoyltransferase.